Reading from the N-terminus, the 216-residue chain is Octanoyltransferase (216 aa).

The region spanning 33 to 216 (AATADELWIV…ANRLSTSLSR (184 aa)) is the BPL/LPL catalytic domain. Residues 72-79 (RGGEVTYH), 148-150 (ALG), and 162-164 (GVS) contribute to the substrate site. Catalysis depends on C180, which acts as the Acyl-thioester intermediate.

This sequence belongs to the LipB family.

Its subcellular location is the cytoplasm. It carries out the reaction octanoyl-[ACP] + L-lysyl-[protein] = N(6)-octanoyl-L-lysyl-[protein] + holo-[ACP] + H(+). The protein operates within protein modification; protein lipoylation via endogenous pathway; protein N(6)-(lipoyl)lysine from octanoyl-[acyl-carrier-protein]: step 1/2. In terms of biological role, catalyzes the transfer of endogenously produced octanoic acid from octanoyl-acyl-carrier-protein onto the lipoyl domains of lipoate-dependent enzymes. Lipoyl-ACP can also act as a substrate although octanoyl-ACP is likely to be the physiological substrate. This Janthinobacterium sp. (strain Marseille) (Minibacterium massiliensis) protein is Octanoyltransferase.